Consider the following 285-residue polypeptide: CCR4-NOT transcription complex subunit 7 (285 aa).

Residues aspartate 40, glutamate 42, aspartate 161, aspartate 230, and glutamate 278 each coordinate a divalent metal cation.

The protein belongs to the CAF1 family. In terms of assembly, component of the CCR4-NOT complex. Mn(2+) serves as cofactor. Mg(2+) is required as a cofactor. Requires Co(2+) as cofactor.

The protein resides in the nucleus. The protein localises to the cytoplasm. The catalysed reaction is Exonucleolytic cleavage of poly(A) to 5'-AMP.. In terms of biological role, has 3'-5' poly(A) exoribonuclease activity for synthetic poly(A) RNA substrate. Catalytic component of the CCR4-NOT complex which is one of the major cellular mRNA deadenylases and is linked to various cellular processes including bulk mRNA degradation, miRNA-mediated repression, translational repression during translational initiation and general transcription regulation. During miRNA-mediated repression the complex also seems to act as translational repressor during translational initiation. Additional complex functions may be a consequence of its influence on mRNA expression. The sequence is that of CCR4-NOT transcription complex subunit 7 (cnot7) from Xenopus laevis (African clawed frog).